A 513-amino-acid chain; its full sequence is GMP synthase [glutamine-hydrolyzing] (513 aa).

The Glutamine amidotransferase type-1 domain maps to 8–198; sequence MILVLDFGSQ…VFGVCDCDGK (191 aa). The active-site Nucleophile is cysteine 85. Catalysis depends on residues histidine 172 and glutamate 174. The GMPS ATP-PPase domain occupies 199-388; that stretch reads WSMENFIEIE…LGIPDDIVWR (190 aa). 226-232 is an ATP binding site; sequence SGGVDSS.

In terms of assembly, homodimer.

It carries out the reaction XMP + L-glutamine + ATP + H2O = GMP + L-glutamate + AMP + diphosphate + 2 H(+). The protein operates within purine metabolism; GMP biosynthesis; GMP from XMP (L-Gln route): step 1/1. Functionally, catalyzes the synthesis of GMP from XMP. This chain is GMP synthase [glutamine-hydrolyzing], found in Bacillus pumilus (strain SAFR-032).